We begin with the raw amino-acid sequence, 438 residues long: Ribosomal protein uS12 methylthiotransferase RimO (438 aa).

The MTTase N-terminal domain maps to 5–116 (PTIAISHLGC…IVQVIQRVEN (112 aa)). The [4Fe-4S] cluster site is built by Cys-14, Cys-50, Cys-79, Cys-154, Cys-158, and Cys-161. The Radical SAM core domain occupies 140 to 369 (TTSEGVAYLR…MQIQQPISLQ (230 aa)). The region spanning 372–438 (CACIGDIVDV…IYDLYGEVIN (67 aa)) is the TRAM domain.

The protein belongs to the methylthiotransferase family. RimO subfamily. [4Fe-4S] cluster is required as a cofactor.

The protein localises to the cytoplasm. The enzyme catalyses L-aspartate(89)-[ribosomal protein uS12]-hydrogen + (sulfur carrier)-SH + AH2 + 2 S-adenosyl-L-methionine = 3-methylsulfanyl-L-aspartate(89)-[ribosomal protein uS12]-hydrogen + (sulfur carrier)-H + 5'-deoxyadenosine + L-methionine + A + S-adenosyl-L-homocysteine + 2 H(+). Its function is as follows. Catalyzes the methylthiolation of an aspartic acid residue of ribosomal protein uS12. In Gloeothece citriformis (strain PCC 7424) (Cyanothece sp. (strain PCC 7424)), this protein is Ribosomal protein uS12 methylthiotransferase RimO.